The chain runs to 187 residues: UPF0301 protein YqgE (187 aa).

Belongs to the UPF0301 (AlgH) family.

The polypeptide is UPF0301 protein YqgE (Salmonella agona (strain SL483)).